Reading from the N-terminus, the 943-residue chain is Isoleucine--tRNA ligase (943 aa).

The 'HIGH' region motif lies at 58–68; sequence PYANGTIHIGH. Glutamate 567 serves as a coordination point for L-isoleucyl-5'-AMP. The 'KMSKS' region motif lies at 608–612; sequence KMSKS. Residue lysine 611 coordinates ATP. Zn(2+)-binding residues include cysteine 906, cysteine 909, cysteine 926, and cysteine 929.

The protein belongs to the class-I aminoacyl-tRNA synthetase family. IleS type 1 subfamily. As to quaternary structure, monomer. Zn(2+) serves as cofactor.

It is found in the cytoplasm. The catalysed reaction is tRNA(Ile) + L-isoleucine + ATP = L-isoleucyl-tRNA(Ile) + AMP + diphosphate. Functionally, catalyzes the attachment of isoleucine to tRNA(Ile). As IleRS can inadvertently accommodate and process structurally similar amino acids such as valine, to avoid such errors it has two additional distinct tRNA(Ile)-dependent editing activities. One activity is designated as 'pretransfer' editing and involves the hydrolysis of activated Val-AMP. The other activity is designated 'posttransfer' editing and involves deacylation of mischarged Val-tRNA(Ile). The polypeptide is Isoleucine--tRNA ligase (Pseudomonas syringae pv. tomato (strain ATCC BAA-871 / DC3000)).